A 331-amino-acid chain; its full sequence is Major ferric iron-binding protein (331 aa).

The signal sequence occupies residues 1–22 (MKTSIRYALLAAALTAATPALA). Fe cation is bound by residues histidine 31, glutamate 79, tyrosine 217, and tyrosine 218.

This sequence belongs to the bacterial solute-binding protein 1 family.

It localises to the periplasm. Its function is as follows. This protein may be a central component in the iron-acquisition system. The protein is Major ferric iron-binding protein (fbpA) of Neisseria meningitidis serogroup B (strain ATCC BAA-335 / MC58).